The sequence spans 129 residues: D-ribose pyranase (129 aa).

Residue His-20 is the Proton donor of the active site. Residues Asp-28, His-96, and 118–120 (YAN) contribute to the substrate site.

It belongs to the RbsD / FucU family. RbsD subfamily. Homodecamer.

The protein resides in the cytoplasm. The enzyme catalyses beta-D-ribopyranose = beta-D-ribofuranose. The protein operates within carbohydrate metabolism; D-ribose degradation; D-ribose 5-phosphate from beta-D-ribopyranose: step 1/2. In terms of biological role, catalyzes the interconversion of beta-pyran and beta-furan forms of D-ribose. The protein is D-ribose pyranase of Exiguobacterium sp. (strain ATCC BAA-1283 / AT1b).